Here is a 211-residue protein sequence, read N- to C-terminus: ATP phosphoribosyltransferase (211 aa).

The protein belongs to the ATP phosphoribosyltransferase family. Short subfamily. Heteromultimer composed of HisG and HisZ subunits.

It is found in the cytoplasm. The enzyme catalyses 1-(5-phospho-beta-D-ribosyl)-ATP + diphosphate = 5-phospho-alpha-D-ribose 1-diphosphate + ATP. It participates in amino-acid biosynthesis; L-histidine biosynthesis; L-histidine from 5-phospho-alpha-D-ribose 1-diphosphate: step 1/9. Its function is as follows. Catalyzes the condensation of ATP and 5-phosphoribose 1-diphosphate to form N'-(5'-phosphoribosyl)-ATP (PR-ATP). Has a crucial role in the pathway because the rate of histidine biosynthesis seems to be controlled primarily by regulation of HisG enzymatic activity. This is ATP phosphoribosyltransferase from Bacillus cereus (strain ATCC 14579 / DSM 31 / CCUG 7414 / JCM 2152 / NBRC 15305 / NCIMB 9373 / NCTC 2599 / NRRL B-3711).